The sequence spans 399 residues: Protein LIGULELESS 1 (399 aa).

Residues 1–28 form a disordered region; it reads MMNLSAAANGRDEFPPYVVPSNAAAPPP. Low complexity predominate over residues 15-24; that stretch reads PPYVVPSNAA. Residues 182–260 form an SBP-type zinc finger; the sequence is PPRCQAEGCK…ADHNRRRRKS (79 aa). Zn(2+) contacts are provided by Cys185, Cys190, Cys207, His210, Cys227, Cys230, His234, and Cys246. A Bipartite nuclear localization signal motif is present at residues 243 to 259; sequence KKSCRKRLADHNRRRRK. The disordered stretch occupies residues 250-292; the sequence is LADHNRRRRKSKPSDADAGDKKRAHANKAAAAKDKAESSSKNM. The segment covering 261–270 has biased composition (basic and acidic residues); the sequence is KPSDADAGDK.

Leaf ligular region, blade and sheath.

Its subcellular location is the nucleus. Its function is as follows. Involved in the formation of ligules and auricles during leaf organogenesis. This is Protein LIGULELESS 1 (LG1) from Zea mays (Maize).